Here is a 161-residue protein sequence, read N- to C-terminus: Regulator of ribonuclease activity A (161 aa).

The protein belongs to the RraA family. In terms of assembly, homotrimer. Binds to both RNA-binding sites in the C-terminal region of Rne and to RhlB.

The protein resides in the cytoplasm. In terms of biological role, globally modulates RNA abundance by binding to RNase E (Rne) and regulating its endonucleolytic activity. Can modulate Rne action in a substrate-dependent manner by altering the composition of the degradosome. Modulates RNA-binding and helicase activities of the degradosome. The polypeptide is Regulator of ribonuclease activity A (Cronobacter sakazakii (strain ATCC BAA-894) (Enterobacter sakazakii)).